A 239-amino-acid polypeptide reads, in one-letter code: 2',3'-cyclic-nucleotide 3'-phosphodiesterase (239 aa).

Catalysis depends on proton donor/acceptor residues His39 and His150.

The protein belongs to the 2H phosphoesterase superfamily. CPD1 family.

It is found in the golgi apparatus. The enzyme catalyses ADP-alpha-D-ribose 1'',2''-cyclic phosphate + H2O = ADP-alpha-D-ribose 1''-phosphate + H(+). It carries out the reaction 2',3'-cyclophospho-AMP + H2O = adenosine 2'-phosphate + H(+). It catalyses the reaction 2',3'-cyclophospho-GMP + H2O = guanosine 2'-phosphate + H(+). The catalysed reaction is 2',3'-cyclophospho-UMP + H2O = uridine 2'-phosphate + H(+). The enzyme catalyses 2',3'-cyclophospho-CMP + H2O = cytidine 2'-phosphate + H(+). It carries out the reaction a nucleoside 2',3'-cyclic phosphate + H2O = a nucleoside 2'-phosphate + H(+). In terms of biological role, involved in the metabolism of ADP-ribose 1',2'-cyclic phosphate which is produced as a consequence of tRNA splicing. This is 2',3'-cyclic-nucleotide 3'-phosphodiesterase from Saccharomyces cerevisiae (strain ATCC 204508 / S288c) (Baker's yeast).